We begin with the raw amino-acid sequence, 684 residues long: MALDGIRMPDGCYADGTWELKMHVTDLNRDVSLRVTGEIHIGGVMLKLVEKLDVKKDWSDHALWWEKKKTWLLKTHWTLDKYGIQADARLLFTPQHKLLRLQLPNMKHMRVKVNFSDRVFKAVSDICKTFNIRHPEELSLLRKPRDPKKKKKKLEDAEEETLELEGPLLTPGSGSIYSSPGLYSKTMTPTYDSRDGSPLSPTSAWFGDSPLSEGNPSILAVSQPITSPDILVKMYKPQSLLDKAKINQGWLDSSRSLMEQDVKENEVLLLRFKYHSFFDLNPKYDAIRVNQLYEQAKWAILLEEIECTEEEMMMFAALQYHINKLSIMSSDNHMNNSEKEVDEVDAALSDLEITLEGGKTSNTLGDITSIPELADYVKVFKPKKLTLKGYKQYWCTFKDITISCYKSREEAHGTPAHQMNLRGCEVTPDVNISGQKFNIKLLIPVADGMNEIWLRCDTEKQYAQWMAACRLASKGKTMADSSYNLEVQNILSFLKMQHMNPDPQIIEPITTDINPECLVSPRYLKKYKNKQPGFVRDLISARILEAHQNVAQMSLIEAKMRFIQAWQSLPEFGITHFLAKFQGGKKDELIGITYNRLIRMDAGTGDAIKTWRFSNMKQWNVNWEIKMVTVEFADEPSLAFICAEVDCKVVHEFIGGYIFLSTRAKDQNESLDEEMFYKLTSGWV.

The interaction with membranes containing phosphatidylinositol phosphate stretch occupies residues histidine 40 to lysine 81. A disordered region spans residues leucine 141–glutamate 163. The FERM domain occupies aspartate 279–phenylalanine 577. The PH domain maps to lysine 378–lysine 474. Lysine 381 contacts a 1,2-diacyl-sn-glycero-3-phospho-(1D-myo-inositol-3,4,5-trisphosphate).

The protein belongs to the kindlin family.

The protein resides in the cytoplasm. The protein localises to the cell cortex. Its subcellular location is the cytoskeleton. It localises to the stress fiber. It is found in the cell junction. The protein resides in the focal adhesion. The protein localises to the membrane. Its subcellular location is the cell projection. It localises to the lamellipodium membrane. It is found in the nucleus. The protein resides in the myofibril. The protein localises to the sarcomere. Its subcellular location is the i band. It localises to the cell surface. Its function is as follows. Scaffolding protein that enhances integrin activation mediated by TLN1 and/or TLN2, but activates integrins only weakly by itself. Binds to membranes enriched in phosphoinositides. Enhances integrin-mediated cell adhesion onto the extracellular matrix and cell spreading; this requires both its ability to interact with integrins and with phospholipid membranes. Required for the assembly of focal adhesions. Participates in the connection between extracellular matrix adhesion sites and the actin cytoskeleton and also in the orchestration of actin assembly and cell shape modulation. Plays a role in the TGFB1 and integrin signaling pathways. Stabilizes active CTNNB1 and plays a role in the regulation of transcription mediated by CTNNB1 and TCF7L2/TCF4 and in Wnt signaling. Required for normal embryonic development, including normal heart morphogenesis and normal angiogenesis. In Danio rerio (Zebrafish), this protein is Fermitin family homolog 2 (fermt2).